We begin with the raw amino-acid sequence, 702 residues long: Cytolytic toxin-beta (702 aa).

The structural MACPF/CDC pore-forming domain stretch occupies residues 2–264 (PSDILVVAAL…EAPQLMADSS (263 aa)). Residues asparagine 94, asparagine 101, and asparagine 286 are each glycosylated (N-linked (GlcNAc...) asparagine). The interval 265–387 (TPILRKVRNT…DIIEEAKHKV (123 aa)) is structural FAT domain. The thioredoxin (THX) domain stretch occupies residues 388–515 (VLSKSQMARE…PRIPPVETIQ (128 aa)). Residues 504–702 (SNPRIPPVET…ANGQIKLKGE (199 aa)) form the B30.2/SPRY domain.

This sequence belongs to the SNTX/VTX toxin family. Heterodimer of alpha and beta subunits; non-covalently linked. Also associates into tetramers or even higher aggregates. Post-translationally, intrachain disulfide bonds may be present in the heterodimer. Expressed by the venom gland.

The protein resides in the secreted. Its function is as follows. This heterodimer induces potent hemolytic activities (when tested on rabbit erythrocytes, EC(50)=25-56 ng/mL) due to its ability to form pores in the cell membrane. The pore may be composed of 10 alpha/beta heterodimers. The toxin shows cardiovascular effects that include a vasorelaxant action that may involve the L-arginine-nitric oxid synthase pathway. In addition, it displays edema-inducing activities, increases vascular permeability. It also shows myotoxic activities and interferes irreversibly with neuromuscular function. It also induces irreversible platelet aggregation in rabbit or rat (but not in human or mouse) whole blood. In addition, it has been observed to increase spontaneous quantal acetylcholine release from isolated frog cutaneous pectoris motor endings. The sequence is that of Cytolytic toxin-beta from Scorpaena plumieri (Spotted scorpionfish).